The following is a 949-amino-acid chain: Protocadherin alpha-11 (949 aa).

The N-terminal stretch at 1-29 (MFGFQRRGLGTPRLQLWLLLLEFWEVGSG) is a signal peptide. Cadherin domains lie at 30–133 (QLHY…PPVF), 157–242 (ASDA…DPEF), 243–349 (DKSE…SPEV), 350–454 (AVTS…APAF), 455–564 (AQPE…APAL), and 580–677 (VPRS…APKA). The Extracellular segment spans residues 30–696 (QLHYSVSEEA…SPEAALVDVN (667 aa)). Residues Asn-265 and Asn-304 are each glycosylated (N-linked (GlcNAc...) asparagine). A glycan (N-linked (GlcNAc...) asparagine) is linked at Asn-547. Residues 697–717 (VYLIIAICVVSSLLVLTLLLY) form a helical membrane-spanning segment. The Cytoplasmic portion of the chain corresponds to 718 to 949 (TALWWSATPT…GNSTTDNSDQ (232 aa)). PXXP repeat units lie at residues 733–736 (PGKP) and 773–776 (PSLP). The segment at 733-893 (PGKPTLVCSR…PDKFIIPGSP (161 aa)) is 6 X 4 AA repeats of P-X-X-P. 2 disordered regions span residues 753–807 (RRQR…DWRY) and 826–949 (ILRA…NSDQ). Positions 780 to 789 (NKEEEGERQE) are enriched in basic and acidic residues. 4 PXXP repeats span residues 795–798 (PGQP), 831–834 (PGGP), 872–875 (PGNP), and 890–893 (PGSP). Over residues 908–922 (DKSDFITFGKKEETK) the composition is skewed to basic and acidic residues.

It is found in the cell membrane. In terms of biological role, potential calcium-dependent cell-adhesion protein. May be involved in the establishment and maintenance of specific neuronal connections in the brain. The polypeptide is Protocadherin alpha-11 (PCDHA11) (Homo sapiens (Human)).